The chain runs to 243 residues: Variant surface antigen E (243 aa).

An N-terminal signal peptide occupies residues 1 to 29 (MKKSIFSKKLLVSFGSLVTLAAIPLIAIS). Cysteine 30 carries the N-palmitoyl cysteine lipid modification. The S-diacylglycerol cysteine moiety is linked to residue cysteine 30. Positions 34–243 (TDNLSQSQQP…TTSDGQNQNK (210 aa)) are disordered. Residues 52-92 (GTNTENGSNNGSGSGTTNSSGGTNQSGSASGNGSSNSSVST) are compositionally biased toward low complexity. Polar residues predominate over residues 93–243 (PDGQHSNPSN…TTSDGQNQNK (151 aa)). 11 consecutive repeat copies span residues 97-109 (HSNP…SDPK), 110-122 (ESNP…SDPK), 123-135 (ESNP…SDGQ), 136-148 (HSNP…SDPK), 149-161 (ESNP…SDGQ), 162-174 (HSNP…SDGQ), 175-187 (HSNP…SDGQ), 188-200 (HSNP…SDGQ), 201-213 (HSNP…SDGQ), 214-226 (HSNP…SDGQ), and 227-239 (HSNP…SDGQ). Positions 97-239 (HSNPSNPTTS…PSNPTTSDGQ (143 aa)) are 11 X 13 AA tandem repeats.

It is found in the cell membrane. Its function is as follows. Responsible for the antigenic diversity for host adaptation. Expression in E.coli of a construct containing vlpD, vlpE, and vlpF yields antigenically distinguishable products corresponding to each gene. This Mesomycoplasma hyorhinis (Mycoplasma hyorhinis) protein is Variant surface antigen E (vlpE).